The chain runs to 161 residues: Large ribosomal subunit protein uL11 (161 aa).

The protein belongs to the universal ribosomal protein uL11 family. Part of the ribosomal stalk of the 50S ribosomal subunit. Interacts with L10 and the large rRNA to form the base of the stalk. L10 forms an elongated spine to which L12 dimers bind in a sequential fashion forming a multimeric L10(L12)X complex.

Functionally, forms part of the ribosomal stalk which helps the ribosome interact with GTP-bound translation factors. This chain is Large ribosomal subunit protein uL11, found in Methanocaldococcus jannaschii (strain ATCC 43067 / DSM 2661 / JAL-1 / JCM 10045 / NBRC 100440) (Methanococcus jannaschii).